A 254-amino-acid polypeptide reads, in one-letter code: DNA repair protein RecO (254 aa).

Belongs to the RecO family.

Its function is as follows. Involved in DNA repair and RecF pathway recombination. This Anaeromyxobacter sp. (strain K) protein is DNA repair protein RecO.